The primary structure comprises 83 residues: Conotoxin VnMKLT1-022 (83 aa).

Positions 1–22 (MKLMCMMIVAVLFLTAWTFVTA) are cleaved as a signal peptide. Positions 23–55 (DDSINGPENRRIWEKLLSKTRDEMKNPEASKLN) are excised as a propeptide. 3 cysteine pairs are disulfide-bonded: cysteine 59/cysteine 74, cysteine 66/cysteine 78, and cysteine 73/cysteine 82.

The protein belongs to the conotoxin O1 superfamily. Expressed by the venom duct.

It localises to the secreted. In Conus ventricosus (Mediterranean cone), this protein is Conotoxin VnMKLT1-022.